We begin with the raw amino-acid sequence, 353 residues long: Methylthioribose-1-phosphate isomerase (353 aa).

Substrate-binding positions include 51–53, Arg94, and Gln203; that span reads RGA. Asp244 (proton donor) is an active-site residue. A substrate-binding site is contributed by 254–255; the sequence is NK.

Belongs to the eIF-2B alpha/beta/delta subunits family. MtnA subfamily.

The catalysed reaction is 5-(methylsulfanyl)-alpha-D-ribose 1-phosphate = 5-(methylsulfanyl)-D-ribulose 1-phosphate. Its pathway is amino-acid biosynthesis; L-methionine biosynthesis via salvage pathway; L-methionine from S-methyl-5-thio-alpha-D-ribose 1-phosphate: step 1/6. Catalyzes the interconversion of methylthioribose-1-phosphate (MTR-1-P) into methylthioribulose-1-phosphate (MTRu-1-P). This chain is Methylthioribose-1-phosphate isomerase, found in Trichodesmium erythraeum (strain IMS101).